We begin with the raw amino-acid sequence, 240 residues long: Adenylate dimethylallyltransferase (240 aa).

The protein belongs to the isopentenyl transferase family.

The enzyme catalyses dimethylallyl diphosphate + AMP = N(6)-(dimethylallyl)adenosine 5'-phosphate + diphosphate. Its function is as follows. Transfers dimethylallyl groups to AMP as part of the biosynthesis of cytokinin phytohormones. In Agrobacterium fabrum (strain C58 / ATCC 33970) (Agrobacterium tumefaciens (strain C58)), this protein is Adenylate dimethylallyltransferase (izt).